Reading from the N-terminus, the 78-residue chain is Large ribosomal subunit protein bL28 (78 aa).

It belongs to the bacterial ribosomal protein bL28 family.

This chain is Large ribosomal subunit protein bL28, found in Methylobacillus flagellatus (strain ATCC 51484 / DSM 6875 / VKM B-1610 / KT).